The sequence spans 296 residues: 4-hydroxybenzoate octaprenyltransferase (296 aa).

8 consecutive transmembrane segments (helical) span residues 23 to 43 (IGILLLLWPTLWGIWLASPGW), 46 to 66 (GLVLFVFIAGTVLMRSAGCVM), 99 to 119 (LALALSLVAFILVLQLNPLVV), 141 to 161 (IPQAYLGIAFGFGIPMAFAAI), 163 to 183 (GQLPLEAWILLLANVFWAIAY), 211 to 231 (DVFAVMACYGAFLILMAWVGV), 237 to 257 (WPYFAGLGVAALVALYHYALI), and 265 to 285 (CFKAFLHNNWLGAAIFVGVLA).

Belongs to the UbiA prenyltransferase family. Mg(2+) serves as cofactor.

The protein resides in the cell inner membrane. It carries out the reaction all-trans-octaprenyl diphosphate + 4-hydroxybenzoate = 4-hydroxy-3-(all-trans-octaprenyl)benzoate + diphosphate. The protein operates within cofactor biosynthesis; ubiquinone biosynthesis. Functionally, catalyzes the prenylation of para-hydroxybenzoate (PHB) with an all-trans polyprenyl group. Mediates the second step in the final reaction sequence of ubiquinone-8 (UQ-8) biosynthesis, which is the condensation of the polyisoprenoid side chain with PHB, generating the first membrane-bound Q intermediate 3-octaprenyl-4-hydroxybenzoate. The polypeptide is 4-hydroxybenzoate octaprenyltransferase (Methylobacillus flagellatus (strain ATCC 51484 / DSM 6875 / VKM B-1610 / KT)).